The chain runs to 265 residues: Beta-lactamase SHV-4 (265 aa).

The active-site Acyl-ester intermediate is Ser45. The cysteines at positions 52 and 98 are disulfide-linked. Glu143 acts as the Proton acceptor in catalysis. 209–211 lines the substrate pocket; that stretch reads KTG.

The protein belongs to the class-A beta-lactamase family.

It catalyses the reaction a beta-lactam + H2O = a substituted beta-amino acid. In terms of biological role, SHV enzymes hydrolyze broad spectrum cephalosporins notably cefotaxime and ceftazidime. SHV-4 causes particularly high levels of resistance to aztreonam and ceftazidime. In Klebsiella pneumoniae, this protein is Beta-lactamase SHV-4 (bla).